A 155-amino-acid chain; its full sequence is Ribosome maturation factor RimP (155 aa).

The protein belongs to the RimP family.

Its subcellular location is the cytoplasm. Required for maturation of 30S ribosomal subunits. The protein is Ribosome maturation factor RimP of Parabacteroides distasonis (strain ATCC 8503 / DSM 20701 / CIP 104284 / JCM 5825 / NCTC 11152).